A 763-amino-acid chain; its full sequence is Ribonucleoside-diphosphate reductase subunit alpha (763 aa).

In terms of domain architecture, ATP-cone spans 5–95; it reads LFVTKRNGKK…IFHLRKKAYG (91 aa). Residues K9, 15–21, T55, and K91 contribute to the ATP site; that span reads EKINLDK. T209 provides a ligand contact to GDP. C225 and C462 form a disulfide bridge. Residues 232 to 234, R262, and R269 each bind dTTP; that span reads DNL. N437 contributes to the GDP binding site. Residue N437 is the Proton acceptor of the active site. C439 functions as the Cysteine radical intermediate in the catalytic mechanism. GDP-binding positions include E441 and 623–625; that span reads ETS. The active-site Proton acceptor is the E441.

The protein belongs to the ribonucleoside diphosphate reductase large chain family. Tetramer of two alpha and two beta subunits.

The catalysed reaction is a 2'-deoxyribonucleoside 5'-diphosphate + [thioredoxin]-disulfide + H2O = a ribonucleoside 5'-diphosphate + [thioredoxin]-dithiol. Under complex allosteric control mediated by deoxynucleoside triphosphates and ATP binding to separate specificity and activation sites on the alpha subunit. The type of nucleotide bound at the specificity site determines substrate preference. It seems probable that ATP makes the enzyme reduce CDP and UDP, dGTP favors ADP reduction and dTTP favors GDP reduction. Stimulated by ATP and inhibited by dATP binding to the activity site. Its function is as follows. Provides the precursors necessary for DNA synthesis. Catalyzes the biosynthesis of deoxyribonucleotides from the corresponding ribonucleotides. This Buchnera aphidicola subsp. Schizaphis graminum (strain Sg) protein is Ribonucleoside-diphosphate reductase subunit alpha (nrdA).